Reading from the N-terminus, the 139-residue chain is D-ribose pyranase (139 aa).

His-20 functions as the Proton donor in the catalytic mechanism. Residues Asp-28, His-106, and 128–130 (YAN) each bind substrate.

This sequence belongs to the RbsD / FucU family. RbsD subfamily. As to quaternary structure, homodecamer.

The protein localises to the cytoplasm. The enzyme catalyses beta-D-ribopyranose = beta-D-ribofuranose. It functions in the pathway carbohydrate metabolism; D-ribose degradation; D-ribose 5-phosphate from beta-D-ribopyranose: step 1/2. In terms of biological role, catalyzes the interconversion of beta-pyran and beta-furan forms of D-ribose. This Aeromonas salmonicida (strain A449) protein is D-ribose pyranase.